We begin with the raw amino-acid sequence, 199 residues long: MAETQNLLLFRKWDLSDIEVVDPGLKTAISLRKMTLPYTYGRSALKRFNKADANIVERLANKMMHFGKKYAKNTGRMAGKKMGSINTVKTAFEIINLKTGRNPVEVLVRAVENSAPNEDTTRIVYGGTVYHVSVDVSPLRRVDLALRFIADGVKEAAFRKPKSLEEFLAEHLILAANNTTDAPSVKKKNELERIAQASR.

It belongs to the universal ribosomal protein uS7 family. In terms of assembly, part of the 30S ribosomal subunit.

In terms of biological role, one of the primary rRNA binding proteins, it binds directly to 16S rRNA where it nucleates assembly of the head domain of the 30S subunit. Is located at the subunit interface close to the decoding center. The protein is Small ribosomal subunit protein uS7 of Cenarchaeum symbiosum (strain A).